A 344-amino-acid polypeptide reads, in one-letter code: 2,3,4,5-tetrahydropyridine-2,6-dicarboxylate N-succinyltransferase (344 aa).

Glu205 lines the Mg(2+) pocket. The active-site Acyl-anhydride intermediate is the Glu221. Succinyl-CoA contacts are provided by residues Arg223, Gly238, Ser241, Ala264, 279 to 280 (EA), 287 to 289 (GTK), Lys304, and 317 to 320 (RRNS).

This sequence belongs to the type 2 tetrahydrodipicolinate N-succinyltransferase family. As to quaternary structure, homotrimer. The cofactor is Magnesium ions are not essential for catalysis..

It localises to the cytoplasm. The catalysed reaction is (S)-2,3,4,5-tetrahydrodipicolinate + succinyl-CoA + H2O = (S)-2-succinylamino-6-oxoheptanedioate + CoA. The protein operates within amino-acid biosynthesis; L-lysine biosynthesis via DAP pathway; LL-2,6-diaminopimelate from (S)-tetrahydrodipicolinate (succinylase route): step 1/3. Its activity is regulated as follows. Weakly inhibited by D-2-aminopimelate. In terms of biological role, catalyzes the conversion of the cyclic tetrahydrodipicolinate (THDP) into the acyclic N-succinyl-L-2-amino-6-oxopimelate using succinyl-CoA. Displays succinyl transferase activity with L-2-aminopimelate and succinyl-CoA as substrates. The chain is 2,3,4,5-tetrahydropyridine-2,6-dicarboxylate N-succinyltransferase from Pseudomonas aeruginosa (strain ATCC 15692 / DSM 22644 / CIP 104116 / JCM 14847 / LMG 12228 / 1C / PRS 101 / PAO1).